We begin with the raw amino-acid sequence, 335 residues long: Adenine deaminase (335 aa).

The Zn(2+) site is built by His14, His16, and His194. Residue Glu197 is the Proton donor of the active site. Asp275 contributes to the Zn(2+) binding site. Asp276 lines the substrate pocket.

This sequence belongs to the metallo-dependent hydrolases superfamily. Adenosine and AMP deaminases family. Adenine deaminase type 2 subfamily. Zn(2+) is required as a cofactor.

It catalyses the reaction adenine + H2O + H(+) = hypoxanthine + NH4(+). Its function is as follows. Catalyzes the hydrolytic deamination of adenine to hypoxanthine. Plays an important role in the purine salvage pathway and in nitrogen catabolism. In Chlorobium phaeobacteroides (strain BS1), this protein is Adenine deaminase.